The chain runs to 631 residues: Phosphomethylpyrimidine synthase (631 aa).

Residues asparagine 239, methionine 268, tyrosine 297, histidine 333, 353 to 355 (SRG), 394 to 397 (DGLR), and glutamate 433 contribute to the substrate site. Zn(2+) is bound at residue histidine 437. Tyrosine 460 is a substrate binding site. Zn(2+) is bound at residue histidine 501. [4Fe-4S] cluster-binding residues include cysteine 581, cysteine 584, and cysteine 589.

This sequence belongs to the ThiC family. In terms of assembly, homodimer. Requires [4Fe-4S] cluster as cofactor.

It catalyses the reaction 5-amino-1-(5-phospho-beta-D-ribosyl)imidazole + S-adenosyl-L-methionine = 4-amino-2-methyl-5-(phosphooxymethyl)pyrimidine + CO + 5'-deoxyadenosine + formate + L-methionine + 3 H(+). The protein operates within cofactor biosynthesis; thiamine diphosphate biosynthesis. Functionally, catalyzes the synthesis of the hydroxymethylpyrimidine phosphate (HMP-P) moiety of thiamine from aminoimidazole ribotide (AIR) in a radical S-adenosyl-L-methionine (SAM)-dependent reaction. This Escherichia coli O81 (strain ED1a) protein is Phosphomethylpyrimidine synthase.